The sequence spans 62 residues: uncharacterized protein (62 aa).

This sequence belongs to the asfivirus C62L family.

This is an uncharacterized protein from African swine fever virus (strain Badajoz 1971 Vero-adapted) (Ba71V).